Reading from the N-terminus, the 486-residue chain is tRNA (uracil-5-)-methyltransferase homolog B (486 aa).

Positions 305, 355, and 405 each coordinate S-adenosyl-L-methionine. Cys433 acts as the Nucleophile in catalysis. Residue Glu479 is the Proton acceptor of the active site.

It belongs to the class I-like SAM-binding methyltransferase superfamily. RNA M5U methyltransferase family.

It is found in the mitochondrion matrix. It catalyses the reaction uridine(54) in tRNA + S-adenosyl-L-methionine = 5-methyluridine(54) in tRNA + S-adenosyl-L-homocysteine + H(+). It carries out the reaction a uridine in 12S rRNA + S-adenosyl-L-methionine = a 5-methyluridine in 12S rRNA + S-adenosyl-L-homocysteine + H(+). Mitochondrial S-adenosyl-L-methionine-dependent methyltransferase that catalyzes the formation of 5-methyl-uridine in tRNAs and 12S rRNA. Catalyzes the methylation of uridine at position 54 (m5U54) in all tRNAs. Specifically methylates the uridine in position 429 of 12S rRNA (m5U429). Does not affect RNA stability or mitochondrial translation. The sequence is that of tRNA (uracil-5-)-methyltransferase homolog B (TRMT2B) from Pongo abelii (Sumatran orangutan).